Consider the following 313-residue polypeptide: Serine/threonine-protein kinase SZE1 (313 aa).

The N-myristoyl glycine moiety is linked to residue Gly2. In terms of domain architecture, Protein kinase spans 43–311 (MELGESLGYI…EVLDNLNAIA (269 aa)). ATP is bound by residues 49–57 (LGYINPKTL) and Lys71.

This sequence belongs to the protein kinase superfamily. Ser/Thr protein kinase family. In terms of assembly, component of an immune signaling complex made of, at least, SZE1, BKN2/SZE2, ZAR1 and ZED1. Interacts directly with ZED1, ZAR1 and Pseudomonas syringae HOPZ1A at the plasma membrane. N-terminal myristoylation is critical for plasma membrane localization and implication in defense responses. In terms of processing, autophosphorylated. As to expression, expressed in roots, seedlings, rosette leaves, floral organs, siliques and inflorescence stems.

It localises to the cell membrane. The catalysed reaction is L-seryl-[protein] + ATP = O-phospho-L-seryl-[protein] + ADP + H(+). It carries out the reaction L-threonyl-[protein] + ATP = O-phospho-L-threonyl-[protein] + ADP + H(+). Together with BKN2/SZE2 and ZED1, required for effector-triggered immunity (e.g. Pseudomonas syringae effector type III HopZ1a) via the activation of ZAR1, thus being essential for resistance against P.syringae pv. tomato DC3000 expressing HopZ1a. In Arabidopsis thaliana (Mouse-ear cress), this protein is Serine/threonine-protein kinase SZE1.